Here is a 192-residue protein sequence, read N- to C-terminus: Ion-translocating oxidoreductase complex subunit B (192 aa).

Positions 1 to 26 (MNAFWIAVAAVSLLGLAFGAILGYAS) are hydrophobic. The 60-residue stretch at 32–91 (EDDPVVEKIDEILPQSQCGQCGYPGCRPYAEAISCNGEKINRCAPGGEAVMLKIAELLNV) folds into the 4Fe-4S domain. Residues Cys-49, Cys-52, Cys-57, Cys-74, Cys-117, Cys-120, Cys-123, Cys-127, Cys-147, Cys-150, Cys-153, and Cys-157 each contribute to the [4Fe-4S] cluster site. 4Fe-4S ferredoxin-type domains are found at residues 108-137 (MVAVIDENNCIGCTKCIQACPVDAIVGATR) and 138-167 (AMHTVMSDLCTGCNLCVDPCPTHCISLQPV).

This sequence belongs to the 4Fe4S bacterial-type ferredoxin family. RnfB subfamily. As to quaternary structure, the complex is composed of six subunits: RsxA, RsxB, RsxC, RsxD, RsxE and RsxG. The cofactor is [4Fe-4S] cluster.

It localises to the cell inner membrane. Its function is as follows. Part of a membrane-bound complex that couples electron transfer with translocation of ions across the membrane. Required to maintain the reduced state of SoxR. The sequence is that of Ion-translocating oxidoreductase complex subunit B from Escherichia coli O6:H1 (strain CFT073 / ATCC 700928 / UPEC).